Reading from the N-terminus, the 215-residue chain is Lysozyme-like protein 5 (215 aa).

An N-terminal signal peptide occupies residues 1-17 (MKHFFITILLFCSVVSA). In terms of domain architecture, Ch-type lysozyme spans 18 to 215 (ARNGIDINSP…GVSVDMNYIP (198 aa)). Residues Asp-23, Asp-113, and Glu-115 contribute to the active site.

It belongs to the glycosyl hydrolase 25 family.

In terms of biological role, plays a role in resistance to Gram-positive bacteria S.aureus or B.thuringiensis infection. This is Lysozyme-like protein 5 from Caenorhabditis elegans.